Consider the following 251-residue polypeptide: Ditrans,polycis-undecaprenyl-diphosphate synthase ((2E,6E)-farnesyl-diphosphate specific) (251 aa).

D29 is a catalytic residue. D29 contacts Mg(2+). Substrate is bound by residues 30-33 (GNGK), W34, R42, H46, and 74-76 (SSD). The active-site Proton acceptor is the N77. Substrate-binding positions include W78, R80, R197, and 203-205 (RLS). Position 216 (E216) interacts with Mg(2+).

It belongs to the UPP synthase family. Homodimer. Mg(2+) serves as cofactor.

It catalyses the reaction 8 isopentenyl diphosphate + (2E,6E)-farnesyl diphosphate = di-trans,octa-cis-undecaprenyl diphosphate + 8 diphosphate. In terms of biological role, catalyzes the sequential condensation of isopentenyl diphosphate (IPP) with (2E,6E)-farnesyl diphosphate (E,E-FPP) to yield (2Z,6Z,10Z,14Z,18Z,22Z,26Z,30Z,34E,38E)-undecaprenyl diphosphate (di-trans,octa-cis-UPP). UPP is the precursor of glycosyl carrier lipid in the biosynthesis of bacterial cell wall polysaccharide components such as peptidoglycan and lipopolysaccharide. The protein is Ditrans,polycis-undecaprenyl-diphosphate synthase ((2E,6E)-farnesyl-diphosphate specific) of Buchnera aphidicola subsp. Baizongia pistaciae (strain Bp).